The following is a 327-amino-acid chain: Chain length determinant protein (327 aa).

Residues 1-31 (MTVDSNTSSGRGNDPEQIDLIELLLQLWRGK) lie on the Cytoplasmic side of the membrane. The helical transmembrane segment at 32 to 52 (MTIIVAVIIAILLAVGYLMIA) threads the bilayer. Topologically, residues 53–294 (KEKWTSTAII…LPVRRDSPKT (242 aa)) are periplasmic. Residues 295–315 (AITLVLAVLLGGMIGAGIVLG) traverse the membrane as a helical segment. Residues 316-327 (RNALRSYKPKAL) are Cytoplasmic-facing.

This sequence belongs to the WzzB/Cld/Rol family.

The protein resides in the cell inner membrane. Its pathway is bacterial outer membrane biogenesis; lipopolysaccharide biosynthesis. In terms of biological role, confers a modal distribution of chain length on the O-antigen component of lipopolysaccharide (LPS). Gives rise to a reduced number of short chain molecules and increases in numbers of longer molecules, with a modal value of 20. This is Chain length determinant protein (wzzB) from Salmonella typhimurium (strain LT2 / SGSC1412 / ATCC 700720).